The chain runs to 152 residues: D-aminoacyl-tRNA deacylase (152 aa).

The Gly-cisPro motif, important for rejection of L-amino acids motif lies at 142-143 (GP).

This sequence belongs to the DTD family. Homodimer.

It is found in the cytoplasm. The catalysed reaction is glycyl-tRNA(Ala) + H2O = tRNA(Ala) + glycine + H(+). It catalyses the reaction a D-aminoacyl-tRNA + H2O = a tRNA + a D-alpha-amino acid + H(+). Functionally, an aminoacyl-tRNA editing enzyme that deacylates mischarged D-aminoacyl-tRNAs. Also deacylates mischarged glycyl-tRNA(Ala), protecting cells against glycine mischarging by AlaRS. Acts via tRNA-based rather than protein-based catalysis; rejects L-amino acids rather than detecting D-amino acids in the active site. By recycling D-aminoacyl-tRNA to D-amino acids and free tRNA molecules, this enzyme counteracts the toxicity associated with the formation of D-aminoacyl-tRNA entities in vivo and helps enforce protein L-homochirality. This Burkholderia cenocepacia (strain ATCC BAA-245 / DSM 16553 / LMG 16656 / NCTC 13227 / J2315 / CF5610) (Burkholderia cepacia (strain J2315)) protein is D-aminoacyl-tRNA deacylase.